Consider the following 357-residue polypeptide: Peptide chain release factor 1 (357 aa).

Gln234 carries the N5-methylglutamine modification.

The protein belongs to the prokaryotic/mitochondrial release factor family. Methylated by PrmC. Methylation increases the termination efficiency of RF1.

It is found in the cytoplasm. Functionally, peptide chain release factor 1 directs the termination of translation in response to the peptide chain termination codons UAG and UAA. This is Peptide chain release factor 1 from Nocardioides sp. (strain ATCC BAA-499 / JS614).